Consider the following 654-residue polypeptide: MLLRPNSGNTLKYGCLLTKRWLTTSKLLYSVEDMKIKIGQEQYRKALEERIDKIPIENYRNFSIVAHVDHGKSTLSDRLLEMTGVIKPGSKSQVLDKLDVERERGITVKAQTVSMFYNDGKQDYLLHLVDTPGHVDFRAEVSRSYASCGGALLLVDASQGVQAQTVANFYLAYSMGLKLIPIINKIDLDSANIPGAREQIETTFELDPNECIPVSAKTGLNVEQIIPSVIKNIPSPVCDVNKPLRALLVDSWHDPYVGVVMLVHIVDGRMKKGMKILSAHTNRTYDVKEVGIMYPDRTPTSFIKAGQVAYIIPGMKNPREALVGDTFYQMGKHEGLEPLPGFEEPKPMVFVGAFPADGKEFNAMDDQMQNLVLNDRSVTLEQKTSNALGLGWRLGFLGSLHASVFKERLEKEYGAKIILTAPTVPYKIIYKNGEEKIVTNPDDFPDNQKHHDVESYMEPYVEAIMTVPNEYVGNVMTLCLNNRGEQKEIEYLTTGQVLLKYEIPTSQLVEDFFGKLKGCTKGYASLDYEEAGYRKSDIVKMQLCVNGEPQDALTTVIHRSQAQARGKEYVTRFKKFLSYQLLKVPISLKIIQKVVARETIKAKRKDVTQRLHAADISRYKKLLERQKEGKKQMKLSGRVTIKNDAYQAFLRRED.

The tr-type G domain occupies 57–237 (ENYRNFSIVA…SVIKNIPSPV (181 aa)). GTP-binding positions include 66 to 73 (AHVDHGKS), 130 to 134 (DTPGH), and 184 to 187 (NKID).

It belongs to the TRAFAC class translation factor GTPase superfamily. Classic translation factor GTPase family. LepA subfamily.

It is found in the mitochondrion inner membrane. The catalysed reaction is GTP + H2O = GDP + phosphate + H(+). Promotes mitochondrial protein synthesis. May act as a fidelity factor of the translation reaction, by catalyzing a one-codon backward translocation of tRNAs on improperly translocated ribosomes. Binds to mitochondrial ribosomes in a GTP-dependent manner. This is Translation factor GUF1, mitochondrial from Candida albicans (strain WO-1) (Yeast).